We begin with the raw amino-acid sequence, 137 residues long: Altered inheritance of mitochondria protein 11 (137 aa).

The next 2 helical transmembrane spans lie at 20-37 (YGAA…SRAI) and 66-88 (LTYA…CWAL).

Belongs to the AIM11 family.

The protein localises to the membrane. This is Altered inheritance of mitochondria protein 11 (AIM11) from Saccharomyces cerevisiae (strain RM11-1a) (Baker's yeast).